Reading from the N-terminus, the 198-residue chain is PEP-dependent dihydroxyacetone kinase 1, ADP-binding subunit DhaL (198 aa).

One can recognise a DhaL domain in the interval 6 to 194 (DWALRWLNDF…SALLFHAMLQ (189 aa)). Asp30, Asp35, and Asp37 together coordinate Mg(2+). Residues 38–41 (HGIN), 79–80 (AS), Gly120, Met129, Arg166, and 179–181 (DPG) contribute to the ADP site.

Homodimer. The dihydroxyacetone kinase complex is composed of a homodimer of DhaM, a homodimer of DhaK and the subunit DhaL. Mg(2+) is required as a cofactor.

The protein resides in the cytoplasm. The catalysed reaction is dihydroxyacetone + phosphoenolpyruvate = dihydroxyacetone phosphate + pyruvate. The protein operates within polyol metabolism; glycerol degradation. Functionally, ADP-binding subunit of the dihydroxyacetone kinase, which is responsible for the phosphoenolpyruvate (PEP)-dependent phosphorylation of dihydroxyacetone. DhaL-ADP is converted to DhaL-ATP via a phosphoryl group transfer from DhaM and transmits it to dihydroxyacetone binds to DhaK. The polypeptide is PEP-dependent dihydroxyacetone kinase 1, ADP-binding subunit DhaL (Listeria innocua serovar 6a (strain ATCC BAA-680 / CLIP 11262)).